We begin with the raw amino-acid sequence, 206 residues long: Ribosomal RNA small subunit methyltransferase G (206 aa).

S-adenosyl-L-methionine-binding positions include glycine 73, leucine 78, 124-125 (VE), and arginine 139.

The protein belongs to the methyltransferase superfamily. RNA methyltransferase RsmG family.

It localises to the cytoplasm. It carries out the reaction guanosine(527) in 16S rRNA + S-adenosyl-L-methionine = N(7)-methylguanosine(527) in 16S rRNA + S-adenosyl-L-homocysteine. Its function is as follows. Specifically methylates the N7 position of guanine in position 527 of 16S rRNA. In Yersinia pseudotuberculosis serotype O:1b (strain IP 31758), this protein is Ribosomal RNA small subunit methyltransferase G.